Here is a 228-residue protein sequence, read N- to C-terminus: 2,3-bisphosphoglycerate-dependent phosphoglycerate mutase (228 aa).

Residues 8–15 (RHGQSQWN), 21–22 (TG), arginine 60, 87–90 (ERHY), lysine 98, 114–115 (RR), and 180–181 (GN) each bind substrate. Catalysis depends on histidine 9, which acts as the Tele-phosphohistidine intermediate. Glutamate 87 serves as the catalytic Proton donor/acceptor.

The protein belongs to the phosphoglycerate mutase family. BPG-dependent PGAM subfamily. Homodimer.

It catalyses the reaction (2R)-2-phosphoglycerate = (2R)-3-phosphoglycerate. Its pathway is carbohydrate degradation; glycolysis; pyruvate from D-glyceraldehyde 3-phosphate: step 3/5. Functionally, catalyzes the interconversion of 2-phosphoglycerate and 3-phosphoglycerate. The protein is 2,3-bisphosphoglycerate-dependent phosphoglycerate mutase of Sphingopyxis alaskensis (strain DSM 13593 / LMG 18877 / RB2256) (Sphingomonas alaskensis).